The sequence spans 59 residues: Small, acid-soluble spore protein H (59 aa).

This sequence belongs to the SspH family.

It is found in the spore core. This is Small, acid-soluble spore protein H from Alkaliphilus metalliredigens (strain QYMF).